The chain runs to 81 residues: Photosystem I iron-sulfur center (81 aa).

4Fe-4S ferredoxin-type domains follow at residues 2 to 31 and 39 to 68; these read SHSVKIYDTCIGCTQCVRACPTDVLEMIPW and IASAPRTEDCVGCKRCESACPTDFLSVRVY. [4Fe-4S] cluster contacts are provided by cysteine 11, cysteine 14, cysteine 17, cysteine 21, cysteine 48, cysteine 51, cysteine 54, and cysteine 58.

As to quaternary structure, the eukaryotic PSI reaction center is composed of at least 11 subunits. The cofactor is [4Fe-4S] cluster.

The protein localises to the plastid. It is found in the chloroplast thylakoid membrane. The enzyme catalyses reduced [plastocyanin] + hnu + oxidized [2Fe-2S]-[ferredoxin] = oxidized [plastocyanin] + reduced [2Fe-2S]-[ferredoxin]. In terms of biological role, apoprotein for the two 4Fe-4S centers FA and FB of photosystem I (PSI); essential for photochemical activity. FB is the terminal electron acceptor of PSI, donating electrons to ferredoxin. The C-terminus interacts with PsaA/B/D and helps assemble the protein into the PSI complex. Required for binding of PsaD and PsaE to PSI. PSI is a plastocyanin-ferredoxin oxidoreductase, converting photonic excitation into a charge separation, which transfers an electron from the donor P700 chlorophyll pair to the spectroscopically characterized acceptors A0, A1, FX, FA and FB in turn. The chain is Photosystem I iron-sulfur center from Helianthus annuus (Common sunflower).